The chain runs to 243 residues: Proteasome subunit beta (243 aa).

A propeptide spans 1–49 (removed in mature form; by autocatalysis); it reads MRTPTGDLSDGPAEELGRDQPVFGPEIGEFEHSERRAAQADGEGEMKTG. The interval 1–50 is disordered; the sequence is MRTPTGDLSDGPAEELGRDQPVFGPEIGEFEHSERRAAQADGEGEMKTGT. Positions 29–38 are enriched in basic and acidic residues; it reads EFEHSERRAA. Residue Thr-50 is the Nucleophile of the active site.

This sequence belongs to the peptidase T1B family. The 20S proteasome core is composed of 14 alpha and 14 beta subunits that assemble into four stacked heptameric rings, resulting in a barrel-shaped structure. The two inner rings, each composed of seven catalytic beta subunits, are sandwiched by two outer rings, each composed of seven alpha subunits. The catalytic chamber with the active sites is on the inside of the barrel. Has a gated structure, the ends of the cylinder being occluded by the N-termini of the alpha-subunits. Is capped at one or both ends by the proteasome regulatory ATPase, PAN.

It localises to the cytoplasm. The catalysed reaction is Cleavage of peptide bonds with very broad specificity.. With respect to regulation, the formation of the proteasomal ATPase PAN-20S proteasome complex, via the docking of the C-termini of PAN into the intersubunit pockets in the alpha-rings, triggers opening of the gate for substrate entry. Interconversion between the open-gate and close-gate conformations leads to a dynamic regulation of the 20S proteasome proteolysis activity. In terms of biological role, component of the proteasome core, a large protease complex with broad specificity involved in protein degradation. The sequence is that of Proteasome subunit beta from Halorubrum lacusprofundi (strain ATCC 49239 / DSM 5036 / JCM 8891 / ACAM 34).